We begin with the raw amino-acid sequence, 309 residues long: Methionyl-tRNA formyltransferase (309 aa).

(6S)-5,6,7,8-tetrahydrofolate is bound at residue 109-112 (SLLP).

Belongs to the Fmt family.

The catalysed reaction is L-methionyl-tRNA(fMet) + (6R)-10-formyltetrahydrofolate = N-formyl-L-methionyl-tRNA(fMet) + (6S)-5,6,7,8-tetrahydrofolate + H(+). Functionally, attaches a formyl group to the free amino group of methionyl-tRNA(fMet). The formyl group appears to play a dual role in the initiator identity of N-formylmethionyl-tRNA by promoting its recognition by IF2 and preventing the misappropriation of this tRNA by the elongation apparatus. This Clostridium perfringens (strain 13 / Type A) protein is Methionyl-tRNA formyltransferase.